The sequence spans 433 residues: Probable dipeptidase (433 aa).

C20 is an active-site residue.

The protein belongs to the peptidase C69 family.

It catalyses the reaction an L-aminoacyl-L-amino acid + H2O = 2 an L-alpha-amino acid. In Salmonella dublin, this protein is Probable dipeptidase (pipD).